The primary structure comprises 103 residues: Small ribosomal subunit protein uS10 (103 aa).

Belongs to the universal ribosomal protein uS10 family. Part of the 30S ribosomal subunit.

Its function is as follows. Involved in the binding of tRNA to the ribosomes. This Neorickettsia sennetsu (strain ATCC VR-367 / Miyayama) (Ehrlichia sennetsu) protein is Small ribosomal subunit protein uS10.